We begin with the raw amino-acid sequence, 304 residues long: Signal recognition particle receptor FtsY (304 aa).

GTP contacts are provided by residues 109–116, 191–195, and 255–258; these read GVNGVGKT, DTAGR, and TKLD.

Belongs to the GTP-binding SRP family. FtsY subfamily. Part of the signal recognition particle protein translocation system, which is composed of SRP and FtsY. Post-translationally, sensitive to endogenous proteolytic cleavage between residues 18 and 19 and between residues 86 and 87.

It is found in the cell membrane. Its subcellular location is the cytoplasm. It catalyses the reaction GTP + H2O = GDP + phosphate + H(+). Its function is as follows. Involved in targeting and insertion of nascent membrane proteins into the cytoplasmic membrane. Acts as a receptor for the complex formed by the signal recognition particle (SRP) and the ribosome-nascent chain (RNC). The polypeptide is Signal recognition particle receptor FtsY (Thermus aquaticus).